The sequence spans 412 residues: Imidazolonepropionase (412 aa).

Fe(3+) contacts are provided by histidine 76 and histidine 78. The Zn(2+) site is built by histidine 76 and histidine 78. 4-imidazolone-5-propanoate-binding residues include arginine 85, tyrosine 148, and histidine 181. Residue tyrosine 148 participates in N-formimidoyl-L-glutamate binding. A Fe(3+)-binding site is contributed by histidine 242. Histidine 242 is a binding site for Zn(2+). Glutamate 245 contacts 4-imidazolone-5-propanoate. Aspartate 317 lines the Fe(3+) pocket. Residue aspartate 317 participates in Zn(2+) binding. N-formimidoyl-L-glutamate contacts are provided by asparagine 319 and glycine 321. Serine 322 contacts 4-imidazolone-5-propanoate.

This sequence belongs to the metallo-dependent hydrolases superfamily. HutI family. It depends on Zn(2+) as a cofactor. Requires Fe(3+) as cofactor.

It is found in the cytoplasm. It carries out the reaction 4-imidazolone-5-propanoate + H2O = N-formimidoyl-L-glutamate. It functions in the pathway amino-acid degradation; L-histidine degradation into L-glutamate; N-formimidoyl-L-glutamate from L-histidine: step 3/3. Its function is as follows. Catalyzes the hydrolytic cleavage of the carbon-nitrogen bond in imidazolone-5-propanoate to yield N-formimidoyl-L-glutamate. It is the third step in the universal histidine degradation pathway. The protein is Imidazolonepropionase of Staphylococcus aureus (strain MRSA252).